Consider the following 505-residue polypeptide: Probable inorganic carbon transporter subunit DabB (505 aa).

13 helical membrane passes run 9 to 29, 37 to 57, 68 to 88, 105 to 123, 162 to 182, 204 to 224, 231 to 251, 259 to 279, 303 to 323, 355 to 375, 382 to 402, 410 to 430, and 446 to 466; these read SLLT…LLFL, FVRI…LILA, WHLD…GFII, YFTL…WLSG, LFLL…HATG, TGIQ…WPFQ, IVAP…AGGI, LFHG…SVLI, GFML…HLIL, LWVM…WLTA, LISA…LVAF, IAGL…HHLF, and MSAV…GTWV.

The protein belongs to the inorganic carbon transporter (TC 9.A.2) DabB family. Forms a complex with DabA.

The protein localises to the cell membrane. Functionally, part of an energy-coupled inorganic carbon pump. In Bacillus subtilis (strain 168), this protein is Probable inorganic carbon transporter subunit DabB.